The primary structure comprises 391 residues: Arginine biosynthesis bifunctional protein ArgJ (391 aa).

Substrate is bound by residues T149, K172, T183, E263, N386, and S391. The Nucleophile role is filled by T183.

It belongs to the ArgJ family. Heterotetramer of two alpha and two beta chains.

It is found in the cytoplasm. It carries out the reaction N(2)-acetyl-L-ornithine + L-glutamate = N-acetyl-L-glutamate + L-ornithine. It catalyses the reaction L-glutamate + acetyl-CoA = N-acetyl-L-glutamate + CoA + H(+). The protein operates within amino-acid biosynthesis; L-arginine biosynthesis; L-ornithine and N-acetyl-L-glutamate from L-glutamate and N(2)-acetyl-L-ornithine (cyclic): step 1/1. It participates in amino-acid biosynthesis; L-arginine biosynthesis; N(2)-acetyl-L-ornithine from L-glutamate: step 1/4. In terms of biological role, catalyzes two activities which are involved in the cyclic version of arginine biosynthesis: the synthesis of N-acetylglutamate from glutamate and acetyl-CoA as the acetyl donor, and of ornithine by transacetylation between N(2)-acetylornithine and glutamate. In Bifidobacterium longum (strain NCC 2705), this protein is Arginine biosynthesis bifunctional protein ArgJ.